The chain runs to 554 residues: L-ascorbate oxidase homolog (554 aa).

The signal sequence occupies residues 1-21; the sequence is MGSGKVTFVALLLCLSVGVIA. Plastocyanin-like domains follow at residues 22 to 143 and 196 to 296; these read EDPY…LNVH and SAKV…AIIR. 3 N-linked (GlcNAc...) asparagine glycosylation sites follow: N31, N59, and N108. A disulfide bridge connects residues C101 and C540. N332, N352, and N423 each carry an N-linked (GlcNAc...) asparagine glycan. The 111-residue stretch at 411–521 folds into the Plastocyanin-like 3 domain; the sequence is DPSKLTIATN…LGEQLYFSVL (111 aa).

This sequence belongs to the multicopper oxidase family. As to expression, pollen.

Its subcellular location is the secreted. The protein localises to the extracellular space. Functionally, probable oxidoreductase that may be involved in pollen tube growth. The polypeptide is L-ascorbate oxidase homolog (Nicotiana tabacum (Common tobacco)).